The primary structure comprises 572 residues: Asparagine--tRNA ligase, cytoplasmic 1 (572 aa).

Alanine 2 is modified (N-acetylalanine). Positions 53–131 (VRIGGWVKSG…QQIELNVVKV (79 aa)) form a DNA-binding region, OB. The WHEP-TRS domain maps to 236–292 (DVEAARLIVIERGNVVAELKAAKASKEAITAAVAELKIAKETFAHIDERSRLRPGLP).

It belongs to the class-II aminoacyl-tRNA synthetase family.

Its subcellular location is the cytoplasm. The protein localises to the cytosol. The enzyme catalyses tRNA(Asn) + L-asparagine + ATP = L-asparaginyl-tRNA(Asn) + AMP + diphosphate + H(+). The polypeptide is Asparagine--tRNA ligase, cytoplasmic 1 (Arabidopsis thaliana (Mouse-ear cress)).